The chain runs to 477 residues: MTDRAQAVGSGPELGLRLYDTMAGAVRDFVPLRPGHASIYLCGATVQGLPHIGHVRSGVAFDVLRRWLTANGYDVAFIRNVTDIDDKILNKAADAGRPWWEWAATFERAFSAAYDALGVLPPSAEPRATGHITQMVELIERLIDKGHAYAAGGDVYFDVLSLPDYGQLSGHRIDDVHQGEGVATGKRDQRDFTLWKGAKPGEPSWPTPWGRGRPGWHTECVAMCEAYLGPEFDIHAGGMDLVFPHHENEIAQAHGAGDGFARYWLHNGWVTMGGEKMSKSLGNVLSIPAVLQRVRAAELRYYLGSAHYRSMLEFSETALQDAVKAYTGIEDFLHRVCSRVGSVPIGEWTPKFAAALNDDLSVPIALAEIHAARAEGNRALDSGDHQTAMQQASSIRAMMDILGCDPLNERWESRDATSAALKAVDVLVQWALASRAEARERRDWAAADAIRDRLKEAGIEVTDTADGPQWALIERDK.

Cys-42 contacts Zn(2+). A 'HIGH' region motif is present at residues 44–54 (ATVQGLPHIGH). 3 residues coordinate Zn(2+): Cys-220, His-245, and Glu-249. Residues 276 to 280 (KMSKS) carry the 'KMSKS' region motif. Lys-279 lines the ATP pocket.

Belongs to the class-I aminoacyl-tRNA synthetase family. In terms of assembly, monomer. The cofactor is Zn(2+).

It is found in the cytoplasm. It catalyses the reaction tRNA(Cys) + L-cysteine + ATP = L-cysteinyl-tRNA(Cys) + AMP + diphosphate. This is Cysteine--tRNA ligase from Mycolicibacterium smegmatis (strain ATCC 700084 / mc(2)155) (Mycobacterium smegmatis).